The chain runs to 282 residues: Acetyl-coenzyme A carboxylase carboxyl transferase subunit beta (282 aa).

The 254-residue stretch at 29 to 282 (LWRTCPKCQR…LMKYGGKQND (254 aa)) folds into the CoA carboxyltransferase N-terminal domain. Residues cysteine 33, cysteine 36, cysteine 51, and cysteine 54 each contribute to the Zn(2+) site. The segment at 33 to 54 (CPKCQRTLFAAQMDEYATCPGC) adopts a C4-type zinc-finger fold.

It belongs to the AccD/PCCB family. As to quaternary structure, acetyl-CoA carboxylase is a heterohexamer composed of biotin carboxyl carrier protein (AccB), biotin carboxylase (AccC) and two subunits each of ACCase subunit alpha (AccA) and ACCase subunit beta (AccD). Zn(2+) is required as a cofactor.

The protein localises to the cytoplasm. It catalyses the reaction N(6)-carboxybiotinyl-L-lysyl-[protein] + acetyl-CoA = N(6)-biotinyl-L-lysyl-[protein] + malonyl-CoA. It functions in the pathway lipid metabolism; malonyl-CoA biosynthesis; malonyl-CoA from acetyl-CoA: step 1/1. Component of the acetyl coenzyme A carboxylase (ACC) complex. Biotin carboxylase (BC) catalyzes the carboxylation of biotin on its carrier protein (BCCP) and then the CO(2) group is transferred by the transcarboxylase to acetyl-CoA to form malonyl-CoA. The protein is Acetyl-coenzyme A carboxylase carboxyl transferase subunit beta of Limosilactobacillus fermentum (strain NBRC 3956 / LMG 18251) (Lactobacillus fermentum).